Consider the following 167-residue polypeptide: Small ribosomal subunit protein uS7c (167 aa).

It belongs to the universal ribosomal protein uS7 family. In terms of assembly, part of the 30S ribosomal subunit.

Its subcellular location is the plastid. The protein resides in the chloroplast. One of the primary rRNA binding proteins, it binds directly to 16S rRNA where it nucleates assembly of the head domain of the 30S subunit. The chain is Small ribosomal subunit protein uS7c (rps7) from Tetradesmus obliquus (Green alga).